We begin with the raw amino-acid sequence, 105 residues long: Large ribosomal subunit protein uL24 (105 aa).

It belongs to the universal ribosomal protein uL24 family. Part of the 50S ribosomal subunit.

In terms of biological role, one of two assembly initiator proteins, it binds directly to the 5'-end of the 23S rRNA, where it nucleates assembly of the 50S subunit. Its function is as follows. One of the proteins that surrounds the polypeptide exit tunnel on the outside of the subunit. This Clostridium botulinum (strain Langeland / NCTC 10281 / Type F) protein is Large ribosomal subunit protein uL24.